The following is a 447-amino-acid chain: NADH-quinone oxidoreductase subunit N (447 aa).

Helical transmembrane passes span 4–24 (FAALLPVILLGAGAVTAMLAA), 27–47 (LPGLARWIAGFALVAASVALA), 68–88 (LTGLVVCLSGIGSLAFLRPDG), 92–112 (EGPALLLLATLGGVVLTGAVH), 113–133 (AASLFLGLELITLALVALFVL), 146–166 (FLILGAAAAATLLMGLALGHA), 181–201 (ALLTFAAALLLAGLAFKLALV), 215–235 (PGAAAAFAGAASKVAVVTALV), 245–265 (VWALGLGTFAGVSILLGNLAA), 280–300 (VGHAGYIAAALATGAASAPAA), 302–322 (LFYIVTYAPALLAALCVAALI), 342–362 (GAAMAAALVSLAGLPVSAGFF), and 376–395 (AWALLALAIAGSALGAYYYL).

It belongs to the complex I subunit 2 family. In terms of assembly, NDH-1 is composed of 14 different subunits. Subunits NuoA, H, J, K, L, M, N constitute the membrane sector of the complex.

It localises to the cell inner membrane. The catalysed reaction is a quinone + NADH + 5 H(+)(in) = a quinol + NAD(+) + 4 H(+)(out). Its function is as follows. NDH-1 shuttles electrons from NADH, via FMN and iron-sulfur (Fe-S) centers, to quinones in the respiratory chain. The immediate electron acceptor for the enzyme in this species is believed to be ubiquinone. Couples the redox reaction to proton translocation (for every two electrons transferred, four hydrogen ions are translocated across the cytoplasmic membrane), and thus conserves the redox energy in a proton gradient. The sequence is that of NADH-quinone oxidoreductase subunit N from Cereibacter sphaeroides (strain ATCC 17025 / ATH 2.4.3) (Rhodobacter sphaeroides).